The sequence spans 209 residues: Ribonuclease HII (209 aa).

Residues 19–208 (GLVAGVDEAG…VARALQAPVA (190 aa)) enclose the RNase H type-2 domain. A divalent metal cation contacts are provided by Asp-25, Glu-26, and Asp-117.

Belongs to the RNase HII family. The cofactor is Mn(2+). It depends on Mg(2+) as a cofactor.

It is found in the cytoplasm. It carries out the reaction Endonucleolytic cleavage to 5'-phosphomonoester.. In terms of biological role, endonuclease that specifically degrades the RNA of RNA-DNA hybrids. This is Ribonuclease HII from Acidovorax ebreus (strain TPSY) (Diaphorobacter sp. (strain TPSY)).